The chain runs to 277 residues: Ribosomal RNA small subunit methyltransferase I (277 aa).

It belongs to the methyltransferase superfamily. RsmI family.

It is found in the cytoplasm. It carries out the reaction cytidine(1402) in 16S rRNA + S-adenosyl-L-methionine = 2'-O-methylcytidine(1402) in 16S rRNA + S-adenosyl-L-homocysteine + H(+). Functionally, catalyzes the 2'-O-methylation of the ribose of cytidine 1402 (C1402) in 16S rRNA. This Mycoplasma genitalium (strain ATCC 33530 / DSM 19775 / NCTC 10195 / G37) (Mycoplasmoides genitalium) protein is Ribosomal RNA small subunit methyltransferase I.